The sequence spans 257 residues: Imidazole glycerol phosphate synthase subunit HisF (257 aa).

Active-site residues include Asp-12 and Asp-131.

The protein belongs to the HisA/HisF family. In terms of assembly, heterodimer of HisH and HisF.

Its subcellular location is the cytoplasm. It catalyses the reaction 5-[(5-phospho-1-deoxy-D-ribulos-1-ylimino)methylamino]-1-(5-phospho-beta-D-ribosyl)imidazole-4-carboxamide + L-glutamine = D-erythro-1-(imidazol-4-yl)glycerol 3-phosphate + 5-amino-1-(5-phospho-beta-D-ribosyl)imidazole-4-carboxamide + L-glutamate + H(+). The protein operates within amino-acid biosynthesis; L-histidine biosynthesis; L-histidine from 5-phospho-alpha-D-ribose 1-diphosphate: step 5/9. Functionally, IGPS catalyzes the conversion of PRFAR and glutamine to IGP, AICAR and glutamate. The HisF subunit catalyzes the cyclization activity that produces IGP and AICAR from PRFAR using the ammonia provided by the HisH subunit. This is Imidazole glycerol phosphate synthase subunit HisF from Marinomonas sp. (strain MWYL1).